Reading from the N-terminus, the 268-residue chain is Methionine aminopeptidase (268 aa).

A substrate-binding site is contributed by His79. Asp97, Asp108, and His172 together coordinate a divalent metal cation. Residue His179 coordinates substrate. 2 residues coordinate a divalent metal cation: Glu205 and Glu236.

The protein belongs to the peptidase M24A family. Methionine aminopeptidase type 1 subfamily. In terms of assembly, monomer. It depends on Co(2+) as a cofactor. Zn(2+) serves as cofactor. Mn(2+) is required as a cofactor. The cofactor is Fe(2+).

The catalysed reaction is Release of N-terminal amino acids, preferentially methionine, from peptides and arylamides.. Its function is as follows. Removes the N-terminal methionine from nascent proteins. The N-terminal methionine is often cleaved when the second residue in the primary sequence is small and uncharged (Met-Ala-, Cys, Gly, Pro, Ser, Thr, or Val). Requires deformylation of the N(alpha)-formylated initiator methionine before it can be hydrolyzed. This is Methionine aminopeptidase from Haemophilus influenzae (strain ATCC 51907 / DSM 11121 / KW20 / Rd).